A 511-amino-acid polypeptide reads, in one-letter code: Prolyl 3-hydroxylase OGFOD1 (511 aa).

The tract at residues 1 to 20 (MTGKRGTAAGTDGSGNKKGK) is disordered. Residues 138 to 240 (KTVDISCAQY…RLSVSGWFHG (103 aa)) form the Fe2OG dioxygenase domain. Fe cation-binding residues include His-156 and Asp-158. 2-oxoglutarate is bound at residue Tyr-170. His-219 contributes to the Fe cation binding site. Arg-231 is a binding site for 2-oxoglutarate. The disordered stretch occupies residues 372 to 403 (NEESDEGEGPSEPNTVSQQGASSEDDKVPSCS).

It belongs to the TPA1 family. As to quaternary structure, monomer. Fe(2+) is required as a cofactor. L-ascorbate serves as cofactor.

It is found in the cytoplasm. The protein resides in the nucleus. The enzyme catalyses [ribosomal protein uS12]-L-proline + 2-oxoglutarate + O2 = [ribosomal protein uS12]-(3S)-3-hydroxy-L-proline + succinate + CO2. Prolyl 3-hydroxylase that catalyzes 3-hydroxylation of 'Pro-62' of small ribosomal subunit uS12 (rps23), thereby regulating protein translation termination efficiency. Involved in stress granule formation. This Xenopus laevis (African clawed frog) protein is Prolyl 3-hydroxylase OGFOD1 (ogfod1).